The following is a 345-amino-acid chain: D(2) dopamine receptor B (345 aa).

The Extracellular segment spans residues 1–10 (EWRFSRIHCD). Residues Cys9 and Cys84 are joined by a disulfide bond. A helical transmembrane segment spans residues 11-32 (IFVTLDVMMCTASILNLCAISI). The Cytoplasmic segment spans residues 33–53 (DRYTAVAMPMLYNTRYSSKRR). Residues 54-74 (VTVMISVVWVLSFAISCPLLF) traverse the membrane as a helical segment. Over 75–90 (GLNNTASTVCIIDNPA) the chain is Extracellular. Asn77 carries N-linked (GlcNAc...) asparagine glycosylation. The helical transmembrane segment at 91–115 (FVIYSSIVSFYVPFIVTLLVYVQIY) threads the bilayer. Residues 116–275 (IVLRKRRKRV…SQHKEKKATQ (160 aa)) are Cytoplasmic-facing. A compositionally biased stretch (basic and acidic residues) spans 166–177 (KKKVEAGNHPED). Residues 166–199 (KKKVEAGNHPEDMEMEMMSSTSPPEKTKHKSASP) form a disordered region. A helical transmembrane segment spans residues 276–297 (MLAIVLGVFIICWLPFFITHIL). Residues 298 to 311 (NMHCNCNIPQALYS) are Extracellular-facing. Cys301 and Cys303 are disulfide-bonded. A helical transmembrane segment spans residues 312–333 (AFTWLGYVNSAVNPIIYTTFNV). At 334–345 (EFRKAFIKILHC) the chain is on the cytoplasmic side. The S-palmitoyl cysteine moiety is linked to residue Cys345.

Belongs to the G-protein coupled receptor 1 family. Palmitoylated. Palmitoylation is probably required for proper localization to the plasma membrane and stability of the receptor. Brain; pituitary.

It is found in the cell membrane. The protein resides in the golgi apparatus membrane. This is one of the five types (D1 to D5) of receptors for dopamine. The activity of this receptor is mediated by G proteins which inhibits adenylyl cyclase. In Xenopus D2R is involved in the regulation of the melanotrope cells of the intermediate pituitary during background adaptation of the animal. This is D(2) dopamine receptor B (drd2-b) from Xenopus laevis (African clawed frog).